We begin with the raw amino-acid sequence, 280 residues long: F-box only protein 27 (280 aa).

The 48-residue stretch at 20–67 (VLDLSRLPPELLLLVLSHVPPRTLLMHCRRVCRAWRALVDGQALWLLL) folds into the F-box domain. Residues 101-277 (FCALRPLGRN…VTNSSVIIRV (177 aa)) enclose the FBA domain.

Part of a SCF (SKP1-cullin-F-box) protein ligase complex. Interacts with SKP1 and CUL1. Detected in brain, heart and muscle.

Its function is as follows. Substrate-recognition component of the SCF (SKP1-CUL1-F-box protein)-type E3 ubiquitin ligase complex. Able to recognize and bind complex-type oligosaccharides. This is F-box only protein 27 (Fbxo27) from Mus musculus (Mouse).